Consider the following 130-residue polypeptide: Riboflavin kinase (130 aa).

Residue 12-17 participates in CDP binding; that stretch reads GLGVGA. 2 residues coordinate Mg(2+): threonine 39 and asparagine 41. FMN is bound by residues threonine 90 and glutamate 98. CDP is bound at residue 103–106; sequence KNLR.

The protein belongs to the archaeal riboflavin kinase family. Mg(2+) serves as cofactor.

The catalysed reaction is riboflavin + CTP = CDP + FMN + H(+). It functions in the pathway cofactor biosynthesis; FMN biosynthesis; FMN from riboflavin (CTP route): step 1/1. In terms of biological role, catalyzes the CTP-dependent phosphorylation of riboflavin (vitamin B2) to form flavin mononucleotide (FMN). In Staphylothermus marinus (strain ATCC 43588 / DSM 3639 / JCM 9404 / F1), this protein is Riboflavin kinase.